A 181-amino-acid polypeptide reads, in one-letter code: Adenylate kinase (181 aa).

10 to 15 (GAGKGT) serves as a coordination point for ATP. The tract at residues 30–59 (STGDLFRANIGEGTPLGKEAKSYIDAGKLV) is NMP. AMP-binding positions include Thr31, Arg36, 57 to 59 (KLV), 85 to 88 (GFPR), and Gln92. An LID region spans residues 126-132 (ARGRADD). Residue Arg127 coordinates ATP. Arg129 and Arg140 together coordinate AMP. Gly166 provides a ligand contact to ATP.

The protein belongs to the adenylate kinase family. Monomer.

Its subcellular location is the cytoplasm. The enzyme catalyses AMP + ATP = 2 ADP. It functions in the pathway purine metabolism; AMP biosynthesis via salvage pathway; AMP from ADP: step 1/1. Functionally, catalyzes the reversible transfer of the terminal phosphate group between ATP and AMP. Plays an important role in cellular energy homeostasis and in adenine nucleotide metabolism. This chain is Adenylate kinase, found in Corynebacterium diphtheriae (strain ATCC 700971 / NCTC 13129 / Biotype gravis).